The sequence spans 287 residues: Mitochondrial dicarboxylate carrier (287 aa).

Solcar repeat units lie at residues 7 to 87 (SRWY…MRDY), 100 to 187 (NKVL…AKQL), and 196 to 279 (DNIF…LRKH). Helical transmembrane passes span 9–29 (WYFGGLASCGAACCTHPLDLL), 62–81 (GLSASLCRQMTYSLTRFAIY), and 102–122 (VLLGGISGLTGGFVGTPADLV). N6-acetyllysine is present on Lys158. Helical transmembrane passes span 162–181 (GATMASSRGALVTVGQLSCY), 202–222 (FVSSFIAGGCATFLCQPLDVL), and 254–274 (GLFPAGIRLIPHTVLTFMFLE).

This sequence belongs to the mitochondrial carrier (TC 2.A.29) family. As to expression, expressed at very high levels in white adipose tissue. And at low levels in brown adipose tissue, kidney and liver.

The protein localises to the mitochondrion inner membrane. The catalysed reaction is (S)-malate(in) + phosphate(out) = (S)-malate(out) + phosphate(in). The enzyme catalyses malonate(out) + (S)-malate(in) = malonate(in) + (S)-malate(out). It catalyses the reaction (S)-malate(in) + succinate(out) = (S)-malate(out) + succinate(in). It carries out the reaction (S)-malate(in) + sulfate(out) = (S)-malate(out) + sulfate(in). The catalysed reaction is malonate(out) + phosphate(in) = malonate(in) + phosphate(out). The enzyme catalyses succinate(out) + phosphate(in) = succinate(in) + phosphate(out). It catalyses the reaction sulfate(out) + phosphate(in) = sulfate(in) + phosphate(out). It carries out the reaction malonate(out) + succinate(in) = malonate(in) + succinate(out). Regulated by circadian protein CLOCK (Circadian Locomotor Output Cycles Kaput). Catalyzes the electroneutral exchange or flux of physiologically important metabolites such as dicarboxylates (malonate, malate, succinate), inorganic sulfur-containing anions, and phosphate, across mitochondrial inner membrane. Plays an important role in gluconeogenesis, fatty acid metabolism, urea synthesis, and sulfur metabolism, particularly in liver, by supplying the substrates for the different metabolic processes. Regulates fatty acid release from adipocytes, and contributes to systemic insulin sensitivity. The chain is Mitochondrial dicarboxylate carrier from Mus musculus (Mouse).